Consider the following 329-residue polypeptide: Dapdiamide synthesis protein DdaC (329 aa).

It depends on Fe(2+) as a cofactor.

It participates in antibiotic biosynthesis. Involved in dapdiamide antibiotics biosynthesis. Catalyzes the alpha-ketoglutarate-dependent epoxidation of the covalently bound N-beta-fumaramoyl-DAP-S-DdaD to generate N-beta-epoxysuccinamoyl-DAP in thioester linkage to DdaD. In Enterobacter agglomerans (Erwinia herbicola), this protein is Dapdiamide synthesis protein DdaC.